Here is a 121-residue protein sequence, read N- to C-terminus: MANNSVSYLVLLLLVFVLAISESAPVQYCDRVTNLYHEKCDEKQCTEHCKTNEKAESGYCLVVEKQQLSICSFDCSKYKPSTPAPPPPPPKLFYSGSWLQAKVENVMLPGQKNMNCTQCPK.

Positions 1–21 (MANNSVSYLVLLLLVFVLAIS) are cleaved as a signal peptide. An N-linked (GlcNAc...) asparagine glycan is attached at asparagine 115.

In terms of tissue distribution, epidermal anther cells.

Its subcellular location is the secreted. The protein localises to the cell wall. In terms of biological role, anther-specific cell wall protein which could contribute to the cell wall architecture of epidermal anther cells via intermolecular disulfide bridges. The sequence is that of Anther-specific protein SF2 from Helianthus annuus (Common sunflower).